Consider the following 285-residue polypeptide: Golgi phosphoprotein 3-like (285 aa).

A disordered region spans residues 1–43 (MTTLTHRTRRTEVSKSSEKKIESEEDTNQERSPDNEDPGDSKD). Residues 10–43 (RTEVSKSSEKKIESEEDTNQERSPDNEDPGDSKD) are compositionally biased toward basic and acidic residues. A 1,2-diacyl-sn-glycero-3-phospho-(1D-myo-inositol 4-phosphate) is bound by residues Trp67 and Arg76. Ser112 is subject to Phosphoserine. Residues Arg157 and Arg160 each contribute to the a 1,2-diacyl-sn-glycero-3-phospho-(1D-myo-inositol 4-phosphate) site. A beta-hairpin required for oligomerization region spans residues 176-187 (EKQNFLLFDMTT).

The protein belongs to the GOLPH3/VPS74 family. Homooligomer. Does not interact MYO18; differs from GOLPH3 by its inability to interact with MYO18. May interact with ARF1. As to expression, expressed in a subset of tissues tested with higher expression in salivary gland, small intestine and skin (at protein level).

The protein resides in the golgi apparatus. The protein localises to the golgi stack membrane. Its subcellular location is the trans-Golgi network membrane. Phosphatidylinositol-4-phosphate-binding protein that may antagonize the action of GOLPH3 which is required for the process of vesicle budding at the Golgi and anterograde transport to the plasma membrane. The polypeptide is Golgi phosphoprotein 3-like (Golph3l) (Mus musculus (Mouse)).